The chain runs to 320 residues: ATP-dependent 6-phosphofructokinase (320 aa).

G12 provides a ligand contact to ATP. ADP is bound by residues 22-26 (RGVVR) and 55-60 (RYSVSD). ATP-binding positions include 73–74 (RF) and 103–106 (GDGS). D104 contacts Mg(2+). 126–128 (TID) serves as a coordination point for substrate. D128 serves as the catalytic Proton acceptor. R155 is a binding site for ADP. Substrate contacts are provided by residues R163 and 170-172 (MGR). ADP contacts are provided by residues 186–188 (GCE), K212, and 214–216 (KKH). Residues E223, R244, and 250-253 (HIQR) each bind substrate.

The protein belongs to the phosphofructokinase type A (PFKA) family. ATP-dependent PFK group I subfamily. Prokaryotic clade 'B1' sub-subfamily. As to quaternary structure, homotetramer. Mg(2+) serves as cofactor.

The protein resides in the cytoplasm. It catalyses the reaction beta-D-fructose 6-phosphate + ATP = beta-D-fructose 1,6-bisphosphate + ADP + H(+). It functions in the pathway carbohydrate degradation; glycolysis; D-glyceraldehyde 3-phosphate and glycerone phosphate from D-glucose: step 3/4. With respect to regulation, allosterically activated by ADP and other diphosphonucleosides, and allosterically inhibited by phosphoenolpyruvate. Functionally, catalyzes the phosphorylation of D-fructose 6-phosphate to fructose 1,6-bisphosphate by ATP, the first committing step of glycolysis. In Buchnera aphidicola subsp. Baizongia pistaciae (strain Bp), this protein is ATP-dependent 6-phosphofructokinase.